The following is a 560-amino-acid chain: Alpha-farnesene synthase (560 aa).

D308, D312, and E462 together coordinate Mg(2+). A DDXXD motif motif is present at residues D308–D312.

This sequence belongs to the terpene synthase family. Tpsa subfamily. Requires Mg(2+) as cofactor. In terms of tissue distribution, expressed in the rind tissues of ripe fruits.

It localises to the cytoplasm. It catalyses the reaction (2E,6E)-farnesyl diphosphate = (3E,6E)-alpha-farnesene + diphosphate. Its pathway is secondary metabolite biosynthesis; terpenoid biosynthesis. Sesquiterpene synthase producing exclusively alpha-farnesene. Associated with the production of sesquiterpenes responsible for the aroma of the fruit. The sequence is that of Alpha-farnesene synthase from Cucumis melo (Muskmelon).